A 250-amino-acid chain; its full sequence is tRNA (guanine-N(1)-)-methyltransferase (250 aa).

S-adenosyl-L-methionine-binding positions include glycine 113 and 134 to 139 (IGDYVL).

It belongs to the RNA methyltransferase TrmD family. In terms of assembly, homodimer.

The protein resides in the cytoplasm. It catalyses the reaction guanosine(37) in tRNA + S-adenosyl-L-methionine = N(1)-methylguanosine(37) in tRNA + S-adenosyl-L-homocysteine + H(+). Its function is as follows. Specifically methylates guanosine-37 in various tRNAs. This chain is tRNA (guanine-N(1)-)-methyltransferase, found in Buchnera aphidicola subsp. Baizongia pistaciae (strain Bp).